The following is a 213-amino-acid chain: ATP synthase peripheral stalk subunit OSCP, mitochondrial (213 aa).

A mitochondrion-targeting transit peptide spans 1-23 (MAAPAASGLSRQVRSFSTSVVRP). The SIFI-degron motif lies at 5 to 23 (AASGLSRQVRSFSTSVVRP). N6-acetyllysine is present on residues Lys54, Lys60, Lys70, and Lys73. At Lys90 the chain carries N6-succinyllysine. 3 positions are modified to N6-acetyllysine; alternate: Lys100, Lys158, and Lys162. Residues Lys100, Lys158, and Lys162 each carry the N6-succinyllysine; alternate modification. Lys172, Lys176, and Lys192 each carry N6-acetyllysine. An N6-succinyllysine modification is found at Lys199.

It belongs to the ATPase delta chain family. Component of the ATP synthase complex composed at least of ATP5F1A/subunit alpha, ATP5F1B/subunit beta, ATP5MC1/subunit c (homooctomer), MT-ATP6/subunit a, MT-ATP8/subunit 8, ATP5ME/subunit e, ATP5MF/subunit f, ATP5MG/subunit g, ATP5MK/subunit k, ATP5MJ/subunit j, ATP5F1C/subunit gamma, ATP5F1D/subunit delta, ATP5F1E/subunit epsilon, ATP5PF/subunit F6, ATP5PB/subunit b, ATP5PD/subunit d, ATP5PO/subunit OSCP. ATP synthase complex consists of a soluble F(1) head domain (subunits alpha(3) and beta(3)) - the catalytic core - and a membrane F(0) domain - the membrane proton channel (subunits c, a, 8, e, f, g, k and j). These two domains are linked by a central stalk (subunits gamma, delta, and epsilon) rotating inside the F1 region and a stationary peripheral stalk (subunits F6, b, d, and OSCP). Post-translationally, acetylation of Lys-70 and Lys-158 is observed in liver mitochondria from fasted mice but not from fed mice. In terms of processing, acetylation at Lys-162 decreases ATP production. Deacetylated by SIRT3. In response to mitochondrial stress, the precursor protein is ubiquitinated by the SIFI complex in the cytoplasm before mitochondrial import, leading to its degradation. Within the SIFI complex, UBR4 initiates ubiquitin chain that are further elongated or branched by KCMF1.

The protein localises to the mitochondrion. It is found in the mitochondrion inner membrane. Its function is as follows. Subunit OSCP, of the mitochondrial membrane ATP synthase complex (F(1)F(0) ATP synthase or Complex V) that produces ATP from ADP in the presence of a proton gradient across the membrane which is generated by electron transport complexes of the respiratory chain. ATP synthase complex consist of a soluble F(1) head domain - the catalytic core - and a membrane F(1) domain - the membrane proton channel. These two domains are linked by a central stalk rotating inside the F(1) region and a stationary peripheral stalk. During catalysis, ATP synthesis in the catalytic domain of F(1) is coupled via a rotary mechanism of the central stalk subunits to proton translocation. In vivo, can only synthesize ATP although its ATP hydrolase activity can be activated artificially in vitro. Part of the complex F(0) domain. Part of the complex F(0) domain and the peripheric stalk, which acts as a stator to hold the catalytic alpha(3)beta(3) subcomplex and subunit a/ATP6 static relative to the rotary elements. This chain is ATP synthase peripheral stalk subunit OSCP, mitochondrial, found in Mus musculus (Mouse).